We begin with the raw amino-acid sequence, 35 residues long: 30 kDa neutral phosphatase (35 aa).

Over residues 1–28 the composition is skewed to polar residues; the sequence is KSSAEVQQTQQASIPASQKANLGNQNNI. The segment at 1-35 is disordered; sequence KSSAEVQQTQQASIPASQKANLGNQNNIMXVAXYQ.

Highly cationic enzyme that can bind human or rat immunoglobulins as well as serum albumin, and could therefore be involved in post-infectious sequelae. The sequence is that of 30 kDa neutral phosphatase from Staphylococcus aureus.